We begin with the raw amino-acid sequence, 519 residues long: Molybdate transporter 1 (519 aa).

The next 7 membrane-spanning stretches (helical) occupy residues 98-118 (LLHAGLFVAGCVGLLGASQAI), 164-184 (LGTEGLVVGAVALAAMIATTL), 370-390 (AVALSVALLNGAGVWLGAMPC), 412-432 (ILLGCIKAALGLLFGGSLVVL), 436-456 (FPQPLLGALLTVSGIELASVV), 464-484 (GYTFALLTAVAILALDNTGTG), and 485-505 (FLVGLVGVAAVAAYEGAVAAA).

This sequence belongs to the SLC26A/SulP transporter (TC 2.A.53) family.

The protein localises to the membrane. With respect to regulation, 60% inhibition by 20 uM tungstate or by lack of glucose in the medium, but no inhibition by sulfate. Functionally, high affinity molybdate transporter. Acts through an energy-dependent process. This is Molybdate transporter 1 (MOT1) from Chlamydomonas reinhardtii (Chlamydomonas smithii).